The sequence spans 262 residues: Glutamate racemase (262 aa).

Substrate is bound by residues 9-10 (DS) and 41-42 (YG). The active-site Proton donor/acceptor is Cys-73. Residue 74–75 (NT) participates in substrate binding. Cys-180 serves as the catalytic Proton donor/acceptor. 181-182 (TH) is a binding site for substrate.

This sequence belongs to the aspartate/glutamate racemases family.

It catalyses the reaction L-glutamate = D-glutamate. Its pathway is cell wall biogenesis; peptidoglycan biosynthesis. Its function is as follows. Provides the (R)-glutamate required for cell wall biosynthesis. In Aliivibrio fischeri (strain ATCC 700601 / ES114) (Vibrio fischeri), this protein is Glutamate racemase.